The chain runs to 180 residues: Ribulose bisphosphate carboxylase small subunit, chloroplastic 1 (180 aa).

Residues 1–56 (MASSVLSSAAVATRSNVAQANMVAPFTGLKSAASFPVSRKQNLDITSIASNGGRVQ) constitute a chloroplast transit peptide.

Belongs to the RuBisCO small chain family. As to quaternary structure, heterohexadecamer of 8 large and 8 small subunits.

It localises to the plastid. The protein localises to the chloroplast. RuBisCO catalyzes two reactions: the carboxylation of D-ribulose 1,5-bisphosphate, the primary event in carbon dioxide fixation, as well as the oxidative fragmentation of the pentose substrate. Both reactions occur simultaneously and in competition at the same active site. Although the small subunit is not catalytic it is essential for maximal activity. In Nicotiana sylvestris (Wood tobacco), this protein is Ribulose bisphosphate carboxylase small subunit, chloroplastic 1.